The primary structure comprises 708 residues: Otogelin-like protein (708 aa).

Residues 1 to 113 (KIIVNRLARK…SWEIEKSFEV (113 aa)) enclose the VWFD domain. Asparagine 553 carries an N-linked (GlcNAc...) asparagine glycan. 4 disulfides stabilise this stretch: cysteine 616–cysteine 672, cysteine 637–cysteine 686, cysteine 648–cysteine 703, and cysteine 652–cysteine 705. The CTCK domain maps to 616–708 (CKREERICQK…EPIDCTCQWN (93 aa)).

It belongs to the otogelin family.

It localises to the secreted. The sequence is that of Otogelin-like protein (OTOGL) from Pongo abelii (Sumatran orangutan).